A 76-amino-acid polypeptide reads, in one-letter code: Conotoxin VnMSGL-0112 (76 aa).

Positions 1 to 20 (MSGLGIMVLTLLLLVSMATS) are cleaved as a signal peptide. A propeptide spanning residues 21 to 45 (HQDGRGKQATQRDAINVRRRRSITR) is cleaved from the precursor. Intrachain disulfides connect Cys-49-Cys-61, Cys-53-Cys-70, and Cys-60-Cys-74.

This sequence belongs to the conotoxin O3 superfamily. Expressed by the venom duct.

Its subcellular location is the secreted. The polypeptide is Conotoxin VnMSGL-0112 (Conus ventricosus (Mediterranean cone)).